A 102-amino-acid chain; its full sequence is Large ribosomal subunit protein bL21 (102 aa).

This sequence belongs to the bacterial ribosomal protein bL21 family. As to quaternary structure, part of the 50S ribosomal subunit. Contacts protein L20.

In terms of biological role, this protein binds to 23S rRNA in the presence of protein L20. The chain is Large ribosomal subunit protein bL21 from Bacillus subtilis (strain 168).